The following is a 257-amino-acid chain: UPF0246 protein RHOS4_29700 (257 aa).

Belongs to the UPF0246 family.

In Cereibacter sphaeroides (strain ATCC 17023 / DSM 158 / JCM 6121 / CCUG 31486 / LMG 2827 / NBRC 12203 / NCIMB 8253 / ATH 2.4.1.) (Rhodobacter sphaeroides), this protein is UPF0246 protein RHOS4_29700.